A 757-amino-acid polypeptide reads, in one-letter code: RNA-directed RNA polymerase catalytic subunit (757 aa).

Residues 53–82 form a disordered region; sequence GRWTKNTETGAPQLNPIDGPLPKDNEPSGY. 2 consecutive short sequence motifs (nuclear localization signal) follow at residues 187–195 and 203–216; these read RKRRVRDNV and RTIGKKKHRLNKRS. Residues 249–256 form a promoter-binding site region; it reads RGFVYFVE. The RdRp catalytic domain maps to 286–483; sequence VRKMMTNSQD…GINMSKKKSY (198 aa).

The protein belongs to the influenza viruses polymerase PB1 family. As to quaternary structure, influenza RNA polymerase is composed of three subunits: PB1, PB2 and PA. Interacts (via N-terminus) with PA (via C-terminus). Interacts (via C-terminus) with PB2 (via N-terminus); this interaction is essential for transcription initiation. Interacts (via C-terminus) with human PKP2 (via N-terminus); the interaction competitively inhibits the interaction between the RNA polymerase subunits PB1 and PB2. Phosphorylated by host PRKCA.

It localises to the host nucleus. The protein localises to the host cytoplasm. It catalyses the reaction RNA(n) + a ribonucleoside 5'-triphosphate = RNA(n+1) + diphosphate. RNA-dependent RNA polymerase which is responsible for replication and transcription of virus RNA segments. The transcription of viral mRNAs occurs by a unique mechanism called cap-snatching. 5' methylated caps of cellular mRNAs are cleaved after 10-13 nucleotides by PA. In turn, these short capped RNAs are used as primers by PB1 for transcription of viral mRNAs. During virus replication, PB1 initiates RNA synthesis and copy vRNA into complementary RNA (cRNA) which in turn serves as a template for the production of more vRNAs. The polypeptide is RNA-directed RNA polymerase catalytic subunit (Influenza A virus (strain A/India/6263/1980 H1N1)).